A 359-amino-acid chain; its full sequence is Chorismate synthase (359 aa).

NADP(+) is bound at residue R47. FMN is bound by residues R123–S125, G283, K298–S302, and R326.

The protein belongs to the chorismate synthase family. As to quaternary structure, homotetramer. FMNH2 is required as a cofactor.

The enzyme catalyses 5-O-(1-carboxyvinyl)-3-phosphoshikimate = chorismate + phosphate. It functions in the pathway metabolic intermediate biosynthesis; chorismate biosynthesis; chorismate from D-erythrose 4-phosphate and phosphoenolpyruvate: step 7/7. Catalyzes the anti-1,4-elimination of the C-3 phosphate and the C-6 proR hydrogen from 5-enolpyruvylshikimate-3-phosphate (EPSP) to yield chorismate, which is the branch point compound that serves as the starting substrate for the three terminal pathways of aromatic amino acid biosynthesis. This reaction introduces a second double bond into the aromatic ring system. The sequence is that of Chorismate synthase from Chlamydia pneumoniae (Chlamydophila pneumoniae).